Here is a 416-residue protein sequence, read N- to C-terminus: Enolase (416 aa).

Residue Gln160 participates in (2R)-2-phosphoglycerate binding. The active-site Proton donor is Glu204. Mg(2+)-binding residues include Asp239, Glu280, and Asp306. Positions 331, 360, 361, and 382 each coordinate (2R)-2-phosphoglycerate. The active-site Proton acceptor is the Lys331.

The protein belongs to the enolase family. The cofactor is Mg(2+).

The protein localises to the cytoplasm. Its subcellular location is the secreted. It is found in the cell surface. The enzyme catalyses (2R)-2-phosphoglycerate = phosphoenolpyruvate + H2O. It functions in the pathway carbohydrate degradation; glycolysis; pyruvate from D-glyceraldehyde 3-phosphate: step 4/5. Functionally, catalyzes the reversible conversion of 2-phosphoglycerate (2-PG) into phosphoenolpyruvate (PEP). It is essential for the degradation of carbohydrates via glycolysis. In Sulfurisphaera tokodaii (strain DSM 16993 / JCM 10545 / NBRC 100140 / 7) (Sulfolobus tokodaii), this protein is Enolase.